The primary structure comprises 249 residues: Tryptophan synthase alpha chain (249 aa).

Residues glutamate 43 and aspartate 54 each act as proton acceptor in the active site.

Belongs to the TrpA family. In terms of assembly, tetramer of two alpha and two beta chains.

It carries out the reaction (1S,2R)-1-C-(indol-3-yl)glycerol 3-phosphate + L-serine = D-glyceraldehyde 3-phosphate + L-tryptophan + H2O. It functions in the pathway amino-acid biosynthesis; L-tryptophan biosynthesis; L-tryptophan from chorismate: step 5/5. The alpha subunit is responsible for the aldol cleavage of indoleglycerol phosphate to indole and glyceraldehyde 3-phosphate. The sequence is that of Tryptophan synthase alpha chain from Campylobacter jejuni subsp. doylei (strain ATCC BAA-1458 / RM4099 / 269.97).